Here is a 798-residue protein sequence, read N- to C-terminus: Heterogeneous nuclear ribonucleoprotein U (798 aa).

Residue Ser-2 is modified to N-acetylserine. Ser-4 carries the post-translational modification Phosphoserine. Residues 8-42 enclose the SAP domain; that stretch reads VKKLKVSELKEELKKRRLSDKGLKADLMDRLQAAL. Lys-17 and Lys-21 each carry N6-acetyllysine. The tract at residues 41 to 229 is disordered; the sequence is ALDNEAGGRP…VKRPREDHGR (189 aa). At Ser-58 the chain carries Phosphoserine. Composition is skewed to low complexity over residues 71 to 80 and 103 to 113; these read AGLEQEAAAG and ENGAAGAADAG. 2 stretches are compositionally biased toward acidic residues: residues 114-128 and 134-147; these read AMEE…ENGD and EGED…EGAG. Residues 153–169 show a composition bias toward low complexity; the sequence is GEQQSQPPAAAQQASQQ. At Lys-179 the chain carries N6-acetyllysine. Ser-180 is modified (ADP-ribosylserine). The span at 192-203 shows a compositional bias: low complexity; it reads APPGARQGQQQA. Over residues 207–229 the composition is skewed to basic and acidic residues; the sequence is GKTEQKAGDKKRGVKRPREDHGR. Arg-229 carries the post-translational modification Citrulline. Lys-239 carries the post-translational modification N6-acetyllysine; alternate. Lys-239 is covalently cross-linked (Glycyl lysine isopeptide (Lys-Gly) (interchain with G-Cter in SUMO1); alternate). Residue Lys-239 forms a Glycyl lysine isopeptide (Lys-Gly) (interchain with G-Cter in SUMO2); alternate linkage. Tyr-240 is subject to Phosphotyrosine. Phosphoserine is present on residues Ser-241 and Ser-245. In terms of domain architecture, B30.2/SPRY spans 242-438; sequence RAKSPQPPVE…VEFNFGQKEK (197 aa). Thr-260 bears the Phosphothreonine mark. The residue at position 326 (Lys-326) is an N6-acetyllysine. Residues 462 to 646 form an ATPase domain region; the sequence is PKGPEEKKDC…QKLLEQYKEE (185 aa). Lys-469 participates in a covalent cross-link: Glycyl lysine isopeptide (Lys-Gly) (interchain with G-Cter in SUMO2). An ATP-binding site is contributed by 478–485; sequence GLPGAGKT. Lys-490 and Lys-498 each carry N6-acetyllysine; alternate. Glycyl lysine isopeptide (Lys-Gly) (interchain with G-Cter in SUMO2); alternate cross-links involve residues Lys-490 and Lys-498. Position 506 is a phosphothreonine (Thr-506). Residue Lys-510 forms a Glycyl lysine isopeptide (Lys-Gly) (interchain with G-Cter in SUMO2) linkage. Position 525 is an N6-acetyllysine (Lys-525). Position 539 is an N6-acetyllysine; alternate (Lys-539). Lys-539 is covalently cross-linked (Glycyl lysine isopeptide (Lys-Gly) (interchain with G-Cter in SUMO2); alternate). A Glycyl lysine isopeptide (Lys-Gly) (interchain with G-Cter in SUMO2) cross-link involves residue Lys-548. Thr-556 carries the phosphothreonine modification. Glycyl lysine isopeptide (Lys-Gly) (interchain with G-Cter in SUMO2) cross-links involve residues Lys-583 and Lys-600. Residues 585-600 form an actin-binding region; the sequence is EDYKQRTQKKAEVEGK. At Lys-609 the chain carries N6-acetyllysine; alternate. Lys-609 is covalently cross-linked (Glycyl lysine isopeptide (Lys-Gly) (interchain with G-Cter in SUMO2); alternate). A coiled-coil region spans residues 624 to 651; that stretch reads DEITYVELQKEEAQKLLEQYKEESKKAL. Residues Lys-638 and Lys-644 each participate in a glycyl lysine isopeptide (Lys-Gly) (interchain with G-Cter in SUMO2) cross-link. Residues 645–657 are compositionally biased toward basic and acidic residues; the sequence is EESKKALPPEKKQ. The interval 645–727 is disordered; sequence EESKKALPPE…GSGGIGYPYP (83 aa). An Omega-N-methylarginine modification is found at Arg-676. The segment covering 684–702 has biased composition (gly residues); sequence GGFNMRGGNFRGGAPGNRG. The RNA-binding RGG-box stretch occupies residues 688 to 713; that stretch reads MRGGNFRGGAPGNRGGYNRRGNMPQR. Arg-689, Arg-694, and Arg-701 each carry asymmetric dimethylarginine. Arg-707 and Arg-713 each carry asymmetric dimethylarginine; alternate. Residues Arg-707 and Arg-713 each carry the omega-N-methylarginine; alternate modification. Residues 713 to 723 are compositionally biased toward gly residues; that stretch reads RGGGGGSGGIG. An asymmetric dimethylarginine mark is found at Arg-728 and Arg-735. Residues 743-772 form a disordered region; it reads NYNRGGMPNRGNYNQNFRGRGNNRGYKNQS. Lys-787 carries the post-translational modification N6-acetyllysine; alternate. Residue Lys-787 forms a Glycyl lysine isopeptide (Lys-Gly) (interchain with G-Cter in SUMO2); alternate linkage.

As to quaternary structure, oligomer (via ATPase domain and RNA-binding RGG-box region); oligomerization occurs upon ATP-binding in a chromatin-associated RNAs (caRNAs)- and transcription-dependent manner and is required for chromatin decompaction. ATP hydrolysis is required to cycle from an oligomeric to monomeric state to compact chromatin. Component of the coding region determinant (CRD)-mediated complex, composed of DHX9, HNRNPU, IGF2BP1, SYNCRIP and YBX1. Identified in the spliceosome C complex. Identified in a IGF2BP1-dependent mRNP granule complex containing untranslated mRNAs. Associates with heterogeneous nuclear ribonucleoprotein (hnRNP) particles. Associates (via middle region) with the C-terminal domain (CTD) RNA polymerase II (Pol II) holoenzyme; this association occurs in a RNA-independent manner. Associates (via middle region) with the core-TFIIH basal transcription factor complex; this association inhibits the CTD phosphorylation of RNA polymerase II holoenzyme by down-regulating TFIIH kinase activity. Associates with the telomerase holoenzyme complex. Associates with spindle microtubules (MTs) in a TPX2-dependent manner. Interacts (via C-terminus) with actin; this interaction is direct and mediates association with the phosphorylated CTD of RNA polymerase II and is disrupted in presence of the long non-coding H19 RNA. Interacts with AURKA. Interacts (via C-terminus) with CBX5; this interaction is, at least in part, RNA-dependent. Interacts with CR2. Interacts with CRY1. Interacts (via C-terminus) with EP300; this interaction enhances DNA-binding to nuclear scaffold/matrix attachment region (S/MAR) elements. Interacts with ERBB4. Interacts with GEMIN5. Interacts with IGF2BP1. Interacts with IGF2BP2 and IGF2BP3. Interacts with NCL; this interaction occurs during mitosis. Interacts (via C-terminus) with NR3C1 (via C-terminus). Interacts with PLK1; this interaction induces phosphorylation of HNRNPU at Ser-58 in mitosis. Interacts with POU3F4. Interacts with SMARCA4; this interaction occurs in embryonic stem cells and stimulates global Pol II-mediated transcription. Interacts (via C-terminus) with TOP2A; this interaction protects the topoisomerase TOP2A from degradation and positively regulates the relaxation of supercoiled DNA by TOP2A in a RNA-dependent manner. Interacts with TPX2; this interaction recruits HNRNPU to spindle microtubules (MTs). Interacts with UBQLN2. Interacts (via RNA-binding RGG-box region) with ZBTB7B; the interaction facilitates the recruitment of long non-coding RNA Blnc1 by ZBTB7B. Interacts with ERCC6. Post-translationally, cleaved at Asp-94 by CASP3 during T-cell apoptosis, resulting in a loss of DNA- and chromatin-binding activities. Extensively phosphorylated. Phosphorylated on Ser-58 by PLK1 and dephosphorylated by protein phosphatase 2A (PP2A) in mitosis. In terms of processing, arg-707 and Arg-713 are dimethylated, probably to asymmetric dimethylarginine. Post-translationally, citrullinated by PADI4.

The protein resides in the nucleus. It localises to the nucleus matrix. It is found in the chromosome. Its subcellular location is the nucleus speckle. The protein localises to the cytoplasm. The protein resides in the cytoskeleton. It localises to the microtubule organizing center. It is found in the centrosome. Its subcellular location is the centromere. The protein localises to the kinetochore. The protein resides in the spindle. It localises to the spindle pole. It is found in the midbody. Its subcellular location is the cell surface. The protein localises to the cytoplasmic granule. Functionally, DNA- and RNA-binding protein involved in several cellular processes such as nuclear chromatin organization, telomere-length regulation, transcription, mRNA alternative splicing and stability, Xist-mediated transcriptional silencing and mitotic cell progression. Plays a role in the regulation of interphase large-scale gene-rich chromatin organization through chromatin-associated RNAs (caRNAs) in a transcription-dependent manner, and thereby maintains genomic stability. Required for the localization of the long non-coding Xist RNA on the inactive chromosome X (Xi) and the subsequent initiation and maintenance of X-linked transcriptional gene silencing during X-inactivation. Required for the topoisomerase TOP2A protein stability and activity in a RNA-dependent manner. Plays a role as a RNA polymerase II (Pol II) holoenzyme transcription regulator. Promotes transcription initiation by direct association with the core-TFIIH basal transcription factor complex for the assembly of a functional pre-initiation complex with Pol II in a actin-dependent manner. Blocks Pol II transcription elongation activity by inhibiting the C-terminal domain (CTD) phosphorylation of Pol II and dissociates from Pol II pre-initiation complex prior to productive transcription elongation. Positively regulates CBX5-induced transcriptional gene silencing and retention of CBX5 in the nucleus. Negatively regulates glucocorticoid-mediated transcriptional activation. Key regulator of transcription initiation and elongation in embryonic stem cells upon leukemia inhibitory factor (LIF) signaling. Involved in the long non-coding RNA H19-mediated Pol II transcriptional repression. Participates in the circadian regulation of the core clock component BMAL1 transcription. Plays a role in the regulation of telomere length. Plays a role as a global pre-mRNA alternative splicing modulator by regulating U2 small nuclear ribonucleoprotein (snRNP) biogenesis. Plays a role in mRNA stability. Component of the CRD-mediated complex that promotes MYC mRNA stabilization. Enhances the expression of specific genes, such as tumor necrosis factor TNFA, by regulating mRNA stability, possibly through binding to the 3'-untranslated region (UTR). Plays a role in mitotic cell cycle regulation. Involved in the formation of stable mitotic spindle microtubules (MTs) attachment to kinetochore, spindle organization and chromosome congression. Phosphorylation at Ser-58 by PLK1 is required for chromosome alignement and segregation and progression through mitosis. Also contributes to the targeting of AURKA to mitotic spindle MTs. Binds to double- and single-stranded DNA and RNA, poly(A), poly(C) and poly(G) oligoribonucleotides. Binds to chromatin-associated RNAs (caRNAs). Associates with chromatin to scaffold/matrix attachment region (S/MAR) elements in DNA. Associates with chromatin in a chromatin-associated RNAs (caRNAs)-dependent manner. Binds to the Xist RNA. Binds the long non-coding H19 RNA. Binds to SMN1/2 pre-mRNAs at G/U-rich regions. Binds to small nuclear RNAs (snRNAs). Binds to the 3'-UTR of TNFA mRNA. Binds (via RNA-binding RGG-box region) to the long non-coding Xist RNA; this binding is direct and bridges the Xist RNA and the inactive chromosome X (Xi). Also negatively regulates embryonic stem cell differentiation upon LIF signaling. Required for embryonic development. Binds to brown fat long non-coding RNA 1 (Blnc1); facilitates the recruitment of Blnc1 by ZBTB7B required to drive brown and beige fat development and thermogenesis. The sequence is that of Heterogeneous nuclear ribonucleoprotein U from Rattus norvegicus (Rat).